We begin with the raw amino-acid sequence, 834 residues long: DNA gyrase subunit A (834 aa).

Residues Leu53–Leu520 enclose the Topo IIA-type catalytic domain. The active-site O-(5'-phospho-DNA)-tyrosine intermediate is Tyr141. Residues Gln547–Gly553 carry the GyrA-box motif.

This sequence belongs to the type II topoisomerase GyrA/ParC subunit family. Heterotetramer, composed of two GyrA and two GyrB chains. In the heterotetramer, GyrA contains the active site tyrosine that forms a transient covalent intermediate with DNA, while GyrB binds cofactors and catalyzes ATP hydrolysis.

Its subcellular location is the cytoplasm. It carries out the reaction ATP-dependent breakage, passage and rejoining of double-stranded DNA.. A type II topoisomerase that negatively supercoils closed circular double-stranded (ds) DNA in an ATP-dependent manner to modulate DNA topology and maintain chromosomes in an underwound state. Negative supercoiling favors strand separation, and DNA replication, transcription, recombination and repair, all of which involve strand separation. Also able to catalyze the interconversion of other topological isomers of dsDNA rings, including catenanes and knotted rings. Type II topoisomerases break and join 2 DNA strands simultaneously in an ATP-dependent manner. The sequence is that of DNA gyrase subunit A from Brachyspira hyodysenteriae (strain ATCC 49526 / WA1).